The primary structure comprises 467 residues: Dihydroorotase (467 aa).

Zn(2+) contacts are provided by His60 and His62. Substrate-binding positions include 62-64 (HFR) and Asn94. Zn(2+) is bound by residues Glu146, His180, His234, and Asp313. Asp313 is a catalytic residue. His317 provides a ligand contact to substrate. Residues 439 to 467 (KPGRGEFLEGSGKRSEEDEEENSEETGSD) form a disordered region. The span at 441–454 (GRGEFLEGSGKRSE) shows a compositional bias: basic and acidic residues. Residues 455 to 467 (EDEEENSEETGSD) are compositionally biased toward acidic residues.

This sequence belongs to the metallo-dependent hydrolases superfamily. DHOase family. Class I DHOase subfamily. The cofactor is Zn(2+).

It carries out the reaction (S)-dihydroorotate + H2O = N-carbamoyl-L-aspartate + H(+). Its pathway is pyrimidine metabolism; UMP biosynthesis via de novo pathway; (S)-dihydroorotate from bicarbonate: step 3/3. Its function is as follows. Catalyzes the reversible cyclization of carbamoyl aspartate to dihydroorotate. This Methanosarcina acetivorans (strain ATCC 35395 / DSM 2834 / JCM 12185 / C2A) protein is Dihydroorotase.